Here is a 457-residue protein sequence, read N- to C-terminus: Cell division protein FtsA (457 aa).

This sequence belongs to the FtsA/MreB family. As to quaternary structure, self-interacts. Interacts with FtsZ.

The protein resides in the cell membrane. In terms of biological role, cell division protein that is involved in the assembly of the Z ring. May serve as a membrane anchor for the Z ring. Increased expression restores growth to a PBP2b (penA) deletion strain as well as mreCD and rodA deletions, but not gpsB or rodZ deletions. Does not restore wild-type cell morphology to the penA deletion. This Streptococcus pneumoniae serotype 2 (strain D39 / NCTC 7466) protein is Cell division protein FtsA.